Consider the following 284-residue polypeptide: Serine protease 57 (284 aa).

The N-terminal stretch at 1–35 (MPSSTAMVPGTRGGWHCLVLTTAAALTQLMWLPGC) is a signal peptide. The region spanning 40–269 (IVGGHEVTPH…FVTWIWDVVR (230 aa)) is the Peptidase S1 domain. Residues Cys-65 and Cys-81 are joined by a disulfide bond. Active-site charge relay system residues include His-80 and Asp-128. An N-linked (GlcNAc...) asparagine glycan is attached at Asn-135. Disulfide bonds link Cys-163–Cys-230, Cys-194–Cys-208, and Cys-220–Cys-245. Ser-224 (charge relay system) is an active-site residue.

It belongs to the peptidase S1 family. In terms of processing, after cleavage of the signal peptide, the N-terminus is probably further processed by CTSC. Processing by CTSC is probably required for accumulation in cytoplasmic granules; in the absence of CTSC the protein does not accumulate. N-glycosylated.

It localises to the cytoplasmic granule lumen. It is found in the secreted. Functionally, serine protease that cleaves preferentially after Arg residues. Can also cleave after citrulline (deimidated arginine) and methylarginine residues. In Mus musculus (Mouse), this protein is Serine protease 57 (Prss57).